The sequence spans 200 residues: Large ribosomal subunit protein uL4 (200 aa).

The interval 38 to 72 (GRQGSKQQKTRSDVSGGGKRPWRQKGTGRARAGTI) is disordered.

This sequence belongs to the universal ribosomal protein uL4 family. In terms of assembly, part of the 50S ribosomal subunit.

In terms of biological role, one of the primary rRNA binding proteins, this protein initially binds near the 5'-end of the 23S rRNA. It is important during the early stages of 50S assembly. It makes multiple contacts with different domains of the 23S rRNA in the assembled 50S subunit and ribosome. Forms part of the polypeptide exit tunnel. The protein is Large ribosomal subunit protein uL4 of Pseudomonas fluorescens (strain ATCC BAA-477 / NRRL B-23932 / Pf-5).